A 296-amino-acid chain; its full sequence is Probable endonuclease 4 (296 aa).

Residues His68, His109, Glu144, Asp178, His181, His213, Asp226, His228, and Glu258 each contribute to the Zn(2+) site.

Belongs to the AP endonuclease 2 family. Requires Zn(2+) as cofactor.

It carries out the reaction Endonucleolytic cleavage to 5'-phosphooligonucleotide end-products.. Functionally, endonuclease IV plays a role in DNA repair. It cleaves phosphodiester bonds at apurinic or apyrimidinic (AP) sites, generating a 3'-hydroxyl group and a 5'-terminal sugar phosphate. The sequence is that of Probable endonuclease 4 from Staphylococcus epidermidis (strain ATCC 35984 / DSM 28319 / BCRC 17069 / CCUG 31568 / BM 3577 / RP62A).